The primary structure comprises 256 residues: tRNA-cytidine(32) 2-sulfurtransferase 1 (256 aa).

The PP-loop motif motif lies at 38-43; the sequence is SGGKDS. [4Fe-4S] cluster contacts are provided by Cys113, Cys116, and Cys204.

It belongs to the TtcA family. Homodimer. It depends on Mg(2+) as a cofactor. [4Fe-4S] cluster is required as a cofactor.

It is found in the cytoplasm. It catalyses the reaction cytidine(32) in tRNA + S-sulfanyl-L-cysteinyl-[cysteine desulfurase] + AH2 + ATP = 2-thiocytidine(32) in tRNA + L-cysteinyl-[cysteine desulfurase] + A + AMP + diphosphate + H(+). It functions in the pathway tRNA modification. In terms of biological role, catalyzes the ATP-dependent 2-thiolation of cytidine in position 32 of tRNA, to form 2-thiocytidine (s(2)C32). The sulfur atoms are provided by the cysteine/cysteine desulfurase (IscS) system. The chain is tRNA-cytidine(32) 2-sulfurtransferase 1 from Francisella philomiragia subsp. philomiragia (strain ATCC 25017 / CCUG 19701 / FSC 153 / O#319-036).